Here is a 401-residue protein sequence, read N- to C-terminus: Enoyl-[acyl-carrier-protein] reductase [NADH] (401 aa).

Residues 48 to 53 (GASSGY), 74 to 75 (FE), 111 to 112 (DA), and 140 to 141 (LA) each bind NAD(+). Residue Y226 participates in substrate binding. Y236 functions as the Proton donor in the catalytic mechanism. Residues K245 and 274-276 (VVT) each bind NAD(+).

This sequence belongs to the TER reductase family. In terms of assembly, monomer.

It catalyses the reaction a 2,3-saturated acyl-[ACP] + NAD(+) = a (2E)-enoyl-[ACP] + NADH + H(+). It functions in the pathway lipid metabolism; fatty acid biosynthesis. Its function is as follows. Involved in the final reduction of the elongation cycle of fatty acid synthesis (FAS II). Catalyzes the reduction of a carbon-carbon double bond in an enoyl moiety that is covalently linked to an acyl carrier protein (ACP). In Xylella fastidiosa (strain Temecula1 / ATCC 700964), this protein is Enoyl-[acyl-carrier-protein] reductase [NADH].